A 194-amino-acid chain; its full sequence is Ras-related protein Rab-22A (194 aa).

12–20 (GDTGVGKSS) contributes to the GTP binding site. The Effector region signature appears at 34–42 (INPTIGASF). GTP is bound by residues 60 to 64 (DTAGQ), 118 to 121 (NKCD), and 148 to 150 (SAK). Positions 174–194 (PSGGKGFKLRRQPSEPKRSCC) are disordered. Positions 185–194 (QPSEPKRSCC) are enriched in basic and acidic residues. 2 S-geranylgeranyl cysteine lipidation sites follow: Cys193 and Cys194.

This sequence belongs to the small GTPase superfamily. Rab family. As to quaternary structure, interacts directly with ZFYVE20. Binds EEA1. Interacts (in its GTP-bound form) with RABGEF1. Interacts (in its GTP-bound form) with RINL.

Its subcellular location is the endosome membrane. The protein resides in the cell membrane. It localises to the early endosome. The protein localises to the late endosome. It is found in the cell projection. Its subcellular location is the ruffle. The protein resides in the cytoplasmic vesicle. It localises to the phagosome. The protein localises to the phagosome membrane. Its function is as follows. Plays a role in endocytosis and intracellular protein transport. Mediates trafficking of TF from early endosomes to recycling endosomes. Required for NGF-mediated endocytosis of NTRK1, and subsequent neurite outgrowth. Binds GTP and GDP and has low GTPase activity. Alternates between a GTP-bound active form and a GDP-bound inactive form. This chain is Ras-related protein Rab-22A (RAB22A), found in Homo sapiens (Human).